A 780-amino-acid polypeptide reads, in one-letter code: ATP-dependent 6-phosphofructokinase, muscle type (780 aa).

Position 2 is an N-acetylthreonine (threonine 2). An N-terminal catalytic PFK domain 1 region spans residues 2–390 (THEEHHAAKT…NWEVYKLLAH (389 aa)). Residues glycine 25, 88 to 89 (RC), and 118 to 121 (GDGS) each bind ATP. Aspartate 119 serves as a coordination point for Mg(2+). Phosphoserine is present on serine 133. Substrate is bound by residues 164 to 166 (SID), arginine 201, 208 to 210 (MGR), glutamate 264, arginine 292, and 298 to 301 (HVQR). Residue aspartate 166 is the Proton acceptor of the active site. Serine 377 is modified (phosphoserine). Residues 391–401 (VRPPVSKSGSH) form an interdomain linker region. A C-terminal regulatory PFK domain 2 region spans residues 402–780 (TVAVMNVGAP…TRKRSGEAAV (379 aa)). Residues arginine 471 and 528 to 532 (TVSNN) contribute to the beta-D-fructose 2,6-bisphosphate site. O-linked (GlcNAc) serine glycosylation is present at serine 530. Residue lysine 557 is modified to N6-(2-hydroxyisobutyryl)lysine. Residues arginine 566, 573–575 (MGG), glutamate 629, arginine 655, and 661–664 (HMQQ) each bind beta-D-fructose 2,6-bisphosphate. Serine 667 is subject to Phosphoserine. Arginine 735 serves as a coordination point for beta-D-fructose 2,6-bisphosphate. The residue at position 775 (serine 775) is a Phosphoserine.

It belongs to the phosphofructokinase type A (PFKA) family. ATP-dependent PFK group I subfamily. Eukaryotic two domain clade 'E' sub-subfamily. As to quaternary structure, homo- and heterotetramers. Phosphofructokinase (PFK) enzyme functions as a tetramer composed of different combinations of 3 types of subunits, called PFKM (where M stands for Muscle), PFKL (Liver) and PFKP (Platelet). The composition of the PFK tetramer differs according to the tissue type it is present in. In muscles, it is composed of 4 PFKM subunits (also called M4). In the liver, the predominant form is a tetramer of PFKL subunits (L4). In erythrocytes, both PFKM and PFKL subunits randomly tetramerize to form M4, L4 and other combinations (ML3, M2L2, M3L). The kinetic and regulatory properties of the tetrameric enzyme are dependent on the subunit composition, hence can vary across tissues. Interacts (via C-terminus) with HK1 (via N-terminal spermatogenic cell-specific region). Mg(2+) serves as cofactor. In terms of processing, glcNAcylation decreases enzyme activity.

The protein resides in the cytoplasm. The enzyme catalyses beta-D-fructose 6-phosphate + ATP = beta-D-fructose 1,6-bisphosphate + ADP + H(+). The protein operates within carbohydrate degradation; glycolysis; D-glyceraldehyde 3-phosphate and glycerone phosphate from D-glucose: step 3/4. Its activity is regulated as follows. Allosterically activated by ADP, AMP, or fructose 2,6-bisphosphate, and allosterically inhibited by ATP or citrate. Functionally, catalyzes the phosphorylation of D-fructose 6-phosphate to fructose 1,6-bisphosphate by ATP, the first committing step of glycolysis. In Homo sapiens (Human), this protein is ATP-dependent 6-phosphofructokinase, muscle type (PFKM).